The following is a 110-amino-acid chain: uncharacterized protein (110 aa).

This sequence to M.jannaschii MJ1213 and A.aeolicus AA15.

This is an uncharacterized protein from Methanocaldococcus jannaschii (strain ATCC 43067 / DSM 2661 / JAL-1 / JCM 10045 / NBRC 100440) (Methanococcus jannaschii).